Here is a 438-residue protein sequence, read N- to C-terminus: Serine hydroxymethyltransferase (438 aa).

Residue 133–135 (GHI) participates in (6S)-5,6,7,8-tetrahydrofolate binding. Lys239 bears the N6-(pyridoxal phosphate)lysine mark.

This sequence belongs to the SHMT family. In terms of assembly, homodimer. Pyridoxal 5'-phosphate is required as a cofactor.

It localises to the cytoplasm. It catalyses the reaction 5,10-methylenetetrahydromethanopterin + glycine + H2O = 5,6,7,8-tetrahydromethanopterin + L-serine. It participates in amino-acid biosynthesis; glycine biosynthesis; glycine from L-serine: step 1/1. Catalyzes the reversible interconversion of serine and glycine with tetrahydromethanopterin (H4MPT) serving as the one-carbon carrier. Also exhibits a pteridine-independent aldolase activity toward beta-hydroxyamino acids, producing glycine and aldehydes, via a retro-aldol mechanism. This Archaeoglobus fulgidus (strain ATCC 49558 / DSM 4304 / JCM 9628 / NBRC 100126 / VC-16) protein is Serine hydroxymethyltransferase.